A 128-amino-acid polypeptide reads, in one-letter code: MLWKSVLSVALIVLGIHDCSFKFLEIDKNEEEFAISVEHVVFHFNENQDDDFAYKFLRVRRSLRQKYTLKYLVDLEMGRTLCGKYDEDIDNCPLQEGPGERKVRCTYIVETEAWVTKFTILNSTCVQT.

Residues 1–21 (MLWKSVLSVALIVLGIHDCSF) form the signal peptide. 2 disulfide bridges follow: Cys82-Cys92 and Cys105-Cys125. Asn122 carries N-linked (GlcNAc...) asparagine glycosylation.

This sequence belongs to the cystatin family. In terms of tissue distribution, located at the very proximal caput epididymis (at protein level). Expressed in epididymis, Sertoli cells and testis. Also found to be weakly expressed in ovary and prostate.

The protein localises to the secreted. Functionally, may play a specialized role in spermatogenesis. This Mus musculus (Mouse) protein is Cystatin-12 (Cst12).